Reading from the N-terminus, the 217-residue chain is tRNA (guanine-N(7)-)-methyltransferase (217 aa).

Glu48, Glu73, Asn100, and Asp123 together coordinate S-adenosyl-L-methionine. The active site involves Asp123. Substrate contacts are provided by Lys127 and Asp159.

This sequence belongs to the class I-like SAM-binding methyltransferase superfamily. TrmB family.

The catalysed reaction is guanosine(46) in tRNA + S-adenosyl-L-methionine = N(7)-methylguanosine(46) in tRNA + S-adenosyl-L-homocysteine. It functions in the pathway tRNA modification; N(7)-methylguanine-tRNA biosynthesis. Functionally, catalyzes the formation of N(7)-methylguanine at position 46 (m7G46) in tRNA. The protein is tRNA (guanine-N(7)-)-methyltransferase of Leptospira interrogans serogroup Icterohaemorrhagiae serovar copenhageni (strain Fiocruz L1-130).